We begin with the raw amino-acid sequence, 507 residues long: Pyridoxine 4-oxidase (507 aa).

The active-site Proton acceptor is histidine 448.

Belongs to the GMC oxidoreductase family. Monomer. The cofactor is FAD.

The catalysed reaction is pyridoxine + O2 = pyridoxal + H2O2. It functions in the pathway cofactor degradation; B6 vitamer degradation; pyridoxal from pyridoxine (oxidase route): step 1/1. This is Pyridoxine 4-oxidase (pno) from Microbacterium luteolum (Aureobacterium luteolum).